The following is a 333-amino-acid chain: Anthranilate phosphoribosyltransferase (333 aa).

5-phospho-alpha-D-ribose 1-diphosphate contacts are provided by residues glycine 80, 83–84, serine 88, 90–93, 108–116, and serine 120; these read GD, NIST, and KHGNRSVSS. Glycine 80 provides a ligand contact to anthranilate. Serine 92 contacts Mg(2+). Asparagine 111 is an anthranilate binding site. Residue arginine 166 participates in anthranilate binding. Aspartate 224 and glutamate 225 together coordinate Mg(2+).

This sequence belongs to the anthranilate phosphoribosyltransferase family. Homodimer. Mg(2+) is required as a cofactor.

The enzyme catalyses N-(5-phospho-beta-D-ribosyl)anthranilate + diphosphate = 5-phospho-alpha-D-ribose 1-diphosphate + anthranilate. It functions in the pathway amino-acid biosynthesis; L-tryptophan biosynthesis; L-tryptophan from chorismate: step 2/5. In terms of biological role, catalyzes the transfer of the phosphoribosyl group of 5-phosphorylribose-1-pyrophosphate (PRPP) to anthranilate to yield N-(5'-phosphoribosyl)-anthranilate (PRA). This Yersinia pseudotuberculosis serotype O:1b (strain IP 31758) protein is Anthranilate phosphoribosyltransferase.